An 858-amino-acid polypeptide reads, in one-letter code: DNA mismatch repair protein MutS (858 aa).

613–620 (GPNMAGKS) is an ATP binding site.

It belongs to the DNA mismatch repair MutS family.

This protein is involved in the repair of mismatches in DNA. It is possible that it carries out the mismatch recognition step. This protein has a weak ATPase activity. The sequence is that of DNA mismatch repair protein MutS from Dehalococcoides mccartyi (strain CBDB1).